The primary structure comprises 264 residues: Major prion protein 1 (264 aa).

The N-terminal stretch at 1–24 (MVKSHIGSWILVLFVAMWSDVALC) is a signal peptide. The interaction with GRB2, ERI3 and SYN1 stretch occupies residues 25–241 (KKRPKPGGGW…ESEAYYQRGA (217 aa)). The interval 28-118 (PKPGGGWNTG…QWNKPSKPKT (91 aa)) is disordered. 6 tandem repeats follow at residues 54-62 (SQGGGGWGQ), 63-70 (PHGGGWGQ), 71-78 (PHGGGWGQ), 79-86 (PHGGGWGQ), 87-94 (PHGGGWGQ), and 95-103 (PHGGGGWGQ). The interval 54–103 (SQGGGGWGQPHGGGWGQPHGGGWGQPHGGGWGQPHGGGWGQPHGGGGWGQ) is 6 X 8 AA tandem repeats of P-H-G-G-G-W-G-Q. The span at 55–107 (QGGGGWGQPHGGGWGQPHGGGWGQPHGGGWGQPHGGGWGQPHGGGGWGQGGTH) shows a compositional bias: gly residues. His-72, Gly-73, Gly-74, His-80, Gly-81, Gly-82, His-88, Gly-89, Gly-90, His-96, Gly-98, and Gly-99 together coordinate Cu(2+). An intrachain disulfide couples Cys-190 to Cys-225. Asn-192 and Asn-208 each carry an N-linked (GlcNAc...) asparagine glycan. A lipid anchor (GPI-anchor amidated alanine) is attached at Ala-241. Residues 242–264 (SVILFSSPPVILLISFLIFLIVG) constitute a propeptide, removed in mature form.

Belongs to the prion family. In terms of assembly, monomer and homodimer. Has a tendency to aggregate into amyloid fibrils containing a cross-beta spine, formed by a steric zipper of superposed beta-strands. Soluble oligomers may represent an intermediate stage on the path to fibril formation. Copper binding may promote oligomerization. Interacts with GRB2, APP, ERI3/PRNPIP and SYN1. Mislocalized cytosolically exposed PrP interacts with MGRN1; this interaction alters MGRN1 subcellular location and causes lysosomal enlargement. Interacts with KIAA1191.

The protein resides in the cell membrane. It is found in the golgi apparatus. Functionally, its primary physiological function is unclear. Has cytoprotective activity against internal or environmental stresses. May play a role in neuronal development and synaptic plasticity. May be required for neuronal myelin sheath maintenance. May play a role in iron uptake and iron homeostasis. Soluble oligomers are toxic to cultured neuroblastoma cells and induce apoptosis (in vitro). Association with GPC1 (via its heparan sulfate chains) targets PRNP to lipid rafts. Also provides Cu(2+) or Zn(2+) for the ascorbate-mediated GPC1 deaminase degradation of its heparan sulfate side chains. The sequence is that of Major prion protein 1 from Tragelaphus strepsiceros (Greater kudu).